Reading from the N-terminus, the 345-residue chain is Dihydroorotase (345 aa).

Zn(2+)-binding residues include His-13 and His-15. Substrate-binding positions include 15–17 and Asn-41; that span reads HFR. The Zn(2+) site is built by Lys-98, His-135, and His-173. An N6-carboxylysine modification is found at Lys-98. His-135 is a substrate binding site. Leu-218 is a substrate binding site. Asp-246 serves as a coordination point for Zn(2+). Residue Asp-246 is part of the active site. Residues His-250 and Ala-262 each coordinate substrate.

It belongs to the metallo-dependent hydrolases superfamily. DHOase family. Class II DHOase subfamily. As to quaternary structure, homodimer. Requires Zn(2+) as cofactor.

The enzyme catalyses (S)-dihydroorotate + H2O = N-carbamoyl-L-aspartate + H(+). Its pathway is pyrimidine metabolism; UMP biosynthesis via de novo pathway; (S)-dihydroorotate from bicarbonate: step 3/3. Functionally, catalyzes the reversible cyclization of carbamoyl aspartate to dihydroorotate. The sequence is that of Dihydroorotase from Shewanella frigidimarina (strain NCIMB 400).